The following is a 521-amino-acid chain: Leucine-rich repeat-containing protein 24 (521 aa).

The first 23 residues, 1-23 (MALRAPTLLLLLLGLLLLPLLPG), serve as a signal peptide directing secretion. The 35-residue stretch at 24-58 (LPPRATGCPAACRCYSATVECGALRLRVVPPGIPP) folds into the LRRNT domain. LRR repeat units lie at residues 59–80 (GTQTLFLQDNSIAHLEQGSLAP), 83–104 (ALRHLYLHNNTLRALESGAFRA), 107–128 (RLLELALTGNRLRGLRGGAFVG), 131–152 (QLRVLYLAGNQLAKLLDFTFLH), 155–176 (RLQELHLQENSIELLEDQALAG), and 179–200 (SLALLDLSRNQLGTISKEALQP). An N-linked (GlcNAc...) asparagine glycan is attached at N91. An LRRCT domain is found at 212–267 (NPWRCDCALHWLGSWIKEGGRRLLSSRDKKITCAEPPRLALQSLLEVSGGSLICIP). Residues 268–371 (PSVNVEPPEF…ARVPFHLLVN (104 aa)) enclose the Ig-like C2-type domain. C289 and C353 are joined by a disulfide. A disordered region spans residues 306–330 (QPRDGKPQAQAQLEGGAPGLGGHGT). 2 N-linked (GlcNAc...) asparagine glycosylation sites follow: N342 and N371. The segment at 374–395 (RQQSQQLPDPQAPATRPVGHEP) is disordered. Residues 414–434 (AITAAIALLALTALLLAAMIC) form a helical membrane-spanning segment.

It localises to the membrane. The sequence is that of Leucine-rich repeat-containing protein 24 (Lrrc24) from Mus musculus (Mouse).